The following is a 108-amino-acid chain: Thiosulfate sulfurtransferase GlpE (108 aa).

Positions 17 to 105 (HQGAAVLVDI…WHRHFPADVA (89 aa)) constitute a Rhodanese domain. The active-site Cysteine persulfide intermediate is C65.

This sequence belongs to the GlpE family.

Its subcellular location is the cytoplasm. The catalysed reaction is thiosulfate + hydrogen cyanide = thiocyanate + sulfite + 2 H(+). It catalyses the reaction thiosulfate + [thioredoxin]-dithiol = [thioredoxin]-disulfide + hydrogen sulfide + sulfite + 2 H(+). Functionally, transferase that catalyzes the transfer of sulfur from thiosulfate to thiophilic acceptors such as cyanide or dithiols. May function in a CysM-independent thiosulfate assimilation pathway by catalyzing the conversion of thiosulfate to sulfite, which can then be used for L-cysteine biosynthesis. This chain is Thiosulfate sulfurtransferase GlpE, found in Salmonella arizonae (strain ATCC BAA-731 / CDC346-86 / RSK2980).